The primary structure comprises 226 residues: Glutathione peroxidase 3 (226 aa).

An N-terminal signal peptide occupies residues 1-24 (MARILRASCLLSLLLAGFVPPGRG). Residue Sec-73 is part of the active site. Residue Sec-73 is a non-standard amino acid, selenocysteine.

Belongs to the glutathione peroxidase family. In terms of assembly, homotetramer. As to expression, secreted in plasma.

It localises to the secreted. The catalysed reaction is 2 glutathione + H2O2 = glutathione disulfide + 2 H2O. It catalyses the reaction tert-butyl hydroperoxide + 2 glutathione = tert-butanol + glutathione disulfide + H2O. Protects cells and enzymes from oxidative damage, by catalyzing the reduction of hydrogen peroxide, lipid peroxides and organic hydroperoxide, by glutathione. The polypeptide is Glutathione peroxidase 3 (Mus musculus (Mouse)).